Reading from the N-terminus, the 359-residue chain is Probable RNA methyltransferase RPD_2859 (359 aa).

Glutamate 99 functions as the Proton acceptor in the catalytic mechanism. Residues 105–330 (RFDGHTACIS…PVVVRDTQGR (226 aa)) enclose the Radical SAM core domain. A disulfide bond links cysteine 112 and cysteine 336. The [4Fe-4S] cluster site is built by cysteine 119, cysteine 123, and cysteine 126. Residues 162–163 (GE), serine 194, 217–219 (SLH), and asparagine 293 contribute to the S-adenosyl-L-methionine site. The S-methylcysteine intermediate role is filled by cysteine 336.

The protein belongs to the radical SAM superfamily. RlmN family. Requires [4Fe-4S] cluster as cofactor.

It localises to the cytoplasm. This is Probable RNA methyltransferase RPD_2859 from Rhodopseudomonas palustris (strain BisB5).